The chain runs to 205 residues: Protein-L-isoaspartate O-methyltransferase (205 aa).

Ser56 is an active-site residue.

The protein belongs to the methyltransferase superfamily. L-isoaspartyl/D-aspartyl protein methyltransferase family.

The protein resides in the cytoplasm. It catalyses the reaction [protein]-L-isoaspartate + S-adenosyl-L-methionine = [protein]-L-isoaspartate alpha-methyl ester + S-adenosyl-L-homocysteine. Functionally, catalyzes the methyl esterification of L-isoaspartyl residues in peptides and proteins that result from spontaneous decomposition of normal L-aspartyl and L-asparaginyl residues. It plays a role in the repair and/or degradation of damaged proteins. The polypeptide is Protein-L-isoaspartate O-methyltransferase (Aeromonas salmonicida (strain A449)).